We begin with the raw amino-acid sequence, 79 residues long: Potassium channel toxin Hge-beta-KTx (79 aa).

A signal peptide spans 1–21 (MAKSFFAAFLIIMLISSLVDG). Residues 48-79 (EYMCPVVSSFCKQHCARLGKSGQCDLLECICS) enclose the BetaSPN-type CS-alpha/beta domain. 3 disulfides stabilise this stretch: Cys51–Cys71, Cys58–Cys76, and Cys62–Cys78.

Expressed by the venom gland.

It localises to the secreted. Its function is as follows. The full peptide presents antibacterial and cytotoxic activities. The synthetic C-terminus (AA 33-76) inhibits voltage-gated potassium channels Kv1.1/KCNA1, Kv1.2/KCNA2, and Kv1.3/KCNA3. This is Potassium channel toxin Hge-beta-KTx from Hoffmannihadrurus gertschi (Scorpion).